The sequence spans 204 residues: Nucleoside triphosphate pyrophosphatase (204 aa).

Asp78 serves as the catalytic Proton acceptor.

Belongs to the Maf family. A divalent metal cation is required as a cofactor.

It is found in the cytoplasm. The catalysed reaction is a ribonucleoside 5'-triphosphate + H2O = a ribonucleoside 5'-phosphate + diphosphate + H(+). It catalyses the reaction a 2'-deoxyribonucleoside 5'-triphosphate + H2O = a 2'-deoxyribonucleoside 5'-phosphate + diphosphate + H(+). In terms of biological role, nucleoside triphosphate pyrophosphatase. May have a dual role in cell division arrest and in preventing the incorporation of modified nucleotides into cellular nucleic acids. The polypeptide is Nucleoside triphosphate pyrophosphatase (Prochlorococcus marinus (strain MIT 9215)).